A 294-amino-acid chain; its full sequence is Glutamate-binding protein GluB (294 aa).

An N-terminal signal peptide occupies residues 1–26 (MSHKRMFTRLAAATSAAVLAGITLTA). C27 carries the N-palmitoyl cysteine lipid modification. C27 carries S-diacylglycerol cysteine lipidation.

Belongs to the bacterial solute-binding protein 3 family. As to quaternary structure, the complex is composed of two ATP-binding proteins (GluA), two transmembrane proteins (GluC and GluD) and a solute-binding protein (GluB).

The protein resides in the cell membrane. Its function is as follows. Part of the ABC transporter complex GluABCD involved in glutamate uptake. Binds glutamate with a high affinity. The protein is Glutamate-binding protein GluB of Corynebacterium efficiens (strain DSM 44549 / YS-314 / AJ 12310 / JCM 11189 / NBRC 100395).